We begin with the raw amino-acid sequence, 450 residues long: Calcium-binding and coiled-coil domain-containing protein 2 (450 aa).

The CLIR motif lies at 133–136 (ILVV). Residues 135-349 (VVTTQSEVEE…RENNRLLSYM (215 aa)) are a coiled coil. The short motif at 203–206 (DCWE) is the LIR-like element. Residues 371-381 (DPGLVFGNPYS) form an interaction with LGALS8 region. The segment at 395–450 (KKCPTCKSDFAADVFDHNLALEQHLQTLSLNCPICDKTFPAKEKQIFEDHVFCHTL) is interaction with MYO6. The UBZ1-type zinc finger occupies 423-448 (SLNCPICDKTFPAKEKQIFEDHVFCH). Positions 426, 429, 444, and 448 each coordinate Zn(2+).

This sequence belongs to the CALCOCO family. Dimer. Part of a complex consisting of CALCOCO2, TAX1BP1 and MYO6. Interacts with GEMIN4. Interacts with ATG8 family members MAP1LC3A, MAP1LC3B, GABARAP, GABARAPL1 and GABARAPL2. Interacts with ATG8 family member MAP1LC3C. Interacts with LGALS8. Interacts with TOM1; the interaction is indirect and is mediated by MYO6, which acts as a bridge between TOM1 and CALCOCO2. Interacts with AZI2.

The protein localises to the cytoplasm. It localises to the perinuclear region. Its subcellular location is the cytoskeleton. The protein resides in the cytoplasmic vesicle. It is found in the autophagosome membrane. Xenophagy-specific receptor required for autophagy-mediated intracellular bacteria degradation. Acts as an effector protein of galectin-sensed membrane damage that restricts the proliferation of infecting pathogens upon entry into the cytosol by targeting LGALS8-associated bacteria for autophagy. Initially orchestrates bacteria targeting to autophagosomes and subsequently ensures pathogen degradation by regulating pathogen-containing autophagosome maturation. Bacteria targeting to autophagosomes relies on its interaction with MAP1LC3A, MAP1LC3B and/or GABARAPL2, whereas regulation of pathogen-containing autophagosome maturation requires the interaction with MAP3LC3C. May play a role in ruffle formation and actin cytoskeleton organization and seems to negatively regulate constitutive secretion. The polypeptide is Calcium-binding and coiled-coil domain-containing protein 2 (Bos taurus (Bovine)).